Reading from the N-terminus, the 423-residue chain is Serine--tRNA ligase (423 aa).

An L-serine-binding site is contributed by 230-232; that stretch reads TSE. Position 261 to 263 (261 to 263) interacts with ATP; sequence RSE. An L-serine-binding site is contributed by glutamate 284. Residue 348–351 coordinates ATP; it reads EISS. Position 384 (serine 384) interacts with L-serine.

Belongs to the class-II aminoacyl-tRNA synthetase family. Type-1 seryl-tRNA synthetase subfamily. As to quaternary structure, homodimer. The tRNA molecule binds across the dimer.

It localises to the cytoplasm. The catalysed reaction is tRNA(Ser) + L-serine + ATP = L-seryl-tRNA(Ser) + AMP + diphosphate + H(+). It catalyses the reaction tRNA(Sec) + L-serine + ATP = L-seryl-tRNA(Sec) + AMP + diphosphate + H(+). It participates in aminoacyl-tRNA biosynthesis; selenocysteinyl-tRNA(Sec) biosynthesis; L-seryl-tRNA(Sec) from L-serine and tRNA(Sec): step 1/1. In terms of biological role, catalyzes the attachment of serine to tRNA(Ser). Is also able to aminoacylate tRNA(Sec) with serine, to form the misacylated tRNA L-seryl-tRNA(Sec), which will be further converted into selenocysteinyl-tRNA(Sec). In Macrococcus caseolyticus (strain JCSC5402) (Macrococcoides caseolyticum), this protein is Serine--tRNA ligase.